The sequence spans 218 residues: Small ribosomal subunit protein uS3c (218 aa).

The KH type-2 domain maps to 43–118 (IKNYVQKNTR…KLNIAITRIG (76 aa)).

Belongs to the universal ribosomal protein uS3 family. As to quaternary structure, part of the 30S ribosomal subunit.

It is found in the plastid. The protein resides in the chloroplast. The polypeptide is Small ribosomal subunit protein uS3c (rps3) (Gossypium barbadense (Sea Island cotton)).